The primary structure comprises 353 residues: tRNA-specific 2-thiouridylase MnmA 2 (353 aa).

Residues 9-16 and M35 contribute to the ATP site; that span reads AMSGGVDS. Residue C98 is the Nucleophile of the active site. C98 and C194 are disulfide-bonded. Residue G122 coordinates ATP. Residues 144-146 form an interaction with tRNA region; that stretch reads KDQ. Catalysis depends on C194, which acts as the Cysteine persulfide intermediate. The tract at residues 300 to 301 is interaction with tRNA; sequence RY.

Belongs to the MnmA/TRMU family.

It localises to the cytoplasm. The catalysed reaction is S-sulfanyl-L-cysteinyl-[protein] + uridine(34) in tRNA + AH2 + ATP = 2-thiouridine(34) in tRNA + L-cysteinyl-[protein] + A + AMP + diphosphate + H(+). Functionally, catalyzes the 2-thiolation of uridine at the wobble position (U34) of tRNA, leading to the formation of s(2)U34. The sequence is that of tRNA-specific 2-thiouridylase MnmA 2 from Clostridium botulinum (strain Langeland / NCTC 10281 / Type F).